Consider the following 228-residue polypeptide: Heat shock 70-related protein 4 (228 aa).

The segment at 57-80 is disordered; it reads RWHEPPGNTVFDEAHDRPQVRRPD. Basic and acidic residues predominate over residues 68-80; the sequence is DEAHDRPQVRRPD.

Belongs to the heat shock protein 70 family.

This is Heat shock 70-related protein 4 (HSP70.4) from Leishmania major.